Reading from the N-terminus, the 130-residue chain is Small ribosomal subunit protein uS8 (130 aa).

This sequence belongs to the universal ribosomal protein uS8 family. Part of the 30S ribosomal subunit.

In terms of biological role, one of the primary rRNA binding proteins, it binds directly to 16S rRNA central domain where it helps coordinate assembly of the platform of the 30S subunit. This is Small ribosomal subunit protein uS8 from Methanosphaera stadtmanae (strain ATCC 43021 / DSM 3091 / JCM 11832 / MCB-3).